Here is a 353-residue protein sequence, read N- to C-terminus: UDP-3-O-acylglucosamine N-acyltransferase (353 aa).

Catalysis depends on His242, which acts as the Proton acceptor.

Belongs to the transferase hexapeptide repeat family. LpxD subfamily. Homotrimer.

It catalyses the reaction a UDP-3-O-[(3R)-3-hydroxyacyl]-alpha-D-glucosamine + a (3R)-hydroxyacyl-[ACP] = a UDP-2-N,3-O-bis[(3R)-3-hydroxyacyl]-alpha-D-glucosamine + holo-[ACP] + H(+). It functions in the pathway bacterial outer membrane biogenesis; LPS lipid A biosynthesis. Functionally, catalyzes the N-acylation of UDP-3-O-acylglucosamine using 3-hydroxyacyl-ACP as the acyl donor. Is involved in the biosynthesis of lipid A, a phosphorylated glycolipid that anchors the lipopolysaccharide to the outer membrane of the cell. This is UDP-3-O-acylglucosamine N-acyltransferase from Pseudomonas paraeruginosa (strain DSM 24068 / PA7) (Pseudomonas aeruginosa (strain PA7)).